The chain runs to 162 residues: Interleukin-15 (162 aa).

The first 29 residues, 1–29, serve as a signal peptide directing secretion; the sequence is MRILKPYLRSTSIQCYLCLLLNSHFLTEA. Positions 30-48 are excised as a propeptide; sequence GIHVFILGCISAGLPKTEA. Disulfide bonds link Cys83-Cys133 and Cys90-Cys136. N-linked (GlcNAc...) asparagine glycans are attached at residues Asn113, Asn121, and Asn127.

This sequence belongs to the IL-15/IL-21 family.

It is found in the secreted. Its function is as follows. Cytokine that plays a major role in the development of inflammatory and protective immune responses to microbial invaders and parasites by modulating immune cells of both the innate and adaptive immune systems. Stimulates the proliferation of natural killer cells, T-cells and B-cells and promotes the secretion of several cytokines. In monocytes, induces the production of IL8 and monocyte chemotactic protein 1/CCL2, two chemokines that attract neutrophils and monocytes respectively to sites of infection. Unlike most cytokines, which are secreted in soluble form, IL15 is expressed in association with its high affinity IL15RA on the surface of IL15-producing cells and delivers signals to target cells that express IL2RB and IL2RG receptor subunits. Binding to its receptor triggers the phosphorylation of JAK1 and JAK3 and the recruitment and subsequent phosphorylation of signal transducer and activator of transcription-3/STAT3 and STAT5. In mast cells, induces the rapid tyrosine phosphorylation of STAT6 and thereby controls mast cell survival and release of cytokines such as IL4. The polypeptide is Interleukin-15 (IL15) (Ovis aries (Sheep)).